The chain runs to 153 residues: Ribosomal RNA large subunit methyltransferase H (153 aa).

S-adenosyl-L-methionine contacts are provided by residues Leu70, Gly102, and 121–126; that span reads LSRMTF.

Belongs to the RNA methyltransferase RlmH family. Homodimer.

Its subcellular location is the cytoplasm. It carries out the reaction pseudouridine(1915) in 23S rRNA + S-adenosyl-L-methionine = N(3)-methylpseudouridine(1915) in 23S rRNA + S-adenosyl-L-homocysteine + H(+). Functionally, specifically methylates the pseudouridine at position 1915 (m3Psi1915) in 23S rRNA. The sequence is that of Ribosomal RNA large subunit methyltransferase H from Geobacter sulfurreducens (strain ATCC 51573 / DSM 12127 / PCA).